Here is a 397-residue protein sequence, read N- to C-terminus: Gastric triacylglycerol lipase (397 aa).

The signal sequence occupies residues 1 to 19 (MWWLLVTVCFIHMSGNAFC). N33 carries an N-linked (GlcNAc...) asparagine glycan. Positions 77-376 (PVVFLQHGLL…PNYNHLDFIW (300 aa)) constitute an AB hydrolase-1 domain. S171 serves as the catalytic Nucleophile. C245 and C254 are joined by a disulfide. N-linked (GlcNAc...) asparagine glycans are attached at residues N270 and N326. Residues D342 and H371 each act as charge relay system in the active site.

The protein belongs to the AB hydrolase superfamily. Lipase family.

The protein resides in the secreted. The catalysed reaction is a triacylglycerol + H2O = a diacylglycerol + a fatty acid + H(+). It carries out the reaction 1,2,3-tri-(9Z-octadecenoyl)-glycerol + H2O = 1,2-di-(9Z-octadecenoyl)-sn-glycerol + (9Z)-octadecenoate + H(+). It catalyses the reaction 1,2,3-trioctanoylglycerol + H2O = 1,2-dioctanoyl-sn-glycerol + octanoate + H(+). Inhibited by diethylp-nitrophenyl phosphate but not inhibited by thiol reagents 5,5'-dithiobis(2-nitrobenzoic acid) or 4,4'-dithiopyridine. Catalyzes the hydrolysis of triacylglycerols to yield free fatty acids, diacylglycerol, monoacylglycerol, and glycerol. Shows a preferential hydrolysis at the sn-3 position of triacylglycerol. This chain is Gastric triacylglycerol lipase (LIPF), found in Bos taurus (Bovine).